The primary structure comprises 133 residues: ATP synthase epsilon chain, chloroplastic (133 aa).

This sequence belongs to the ATPase epsilon chain family. In terms of assembly, F-type ATPases have 2 components, CF(1) - the catalytic core - and CF(0) - the membrane proton channel. CF(1) has five subunits: alpha(3), beta(3), gamma(1), delta(1), epsilon(1). CF(0) has three main subunits: a, b and c.

It is found in the plastid. The protein resides in the chloroplast thylakoid membrane. Its function is as follows. Produces ATP from ADP in the presence of a proton gradient across the membrane. The polypeptide is ATP synthase epsilon chain, chloroplastic (Thalassiosira pseudonana (Marine diatom)).